The sequence spans 360 residues: Zinc metalloproteinase nas-5 (360 aa).

Positions 1-21 are cleaved as a signal peptide; that stretch reads MDIKQLLLSIILTVSVVNGRG. Residues 61-269 form the Peptidase M12A domain; it reads NALLSNSPLR…KKVCAIYHCS (209 aa). N-linked (GlcNAc...) asparagine glycosylation is present at Asn-108. Intrachain disulfides connect Cys-111–Cys-268 and Cys-134–Cys-157. Zn(2+) is bound at residue His-165. The active site involves Glu-166. Zn(2+) contacts are provided by His-169 and His-175. A PLAC domain is found at 299-336; sequence QGDSCTDRLGICPMLKSREMLNCKVMATFCCSSCSAPT.

Zn(2+) serves as cofactor.

The protein localises to the secreted. Metalloprotease. The protein is Zinc metalloproteinase nas-5 (nas-5) of Caenorhabditis elegans.